Reading from the N-terminus, the 590-residue chain is MKYTATFALLILAIGIQTQRRSTICRCRQEDACWPTTAEWSSLNQSIDGKLRHLRPVGLPCQQSAYHKEKCDEVLAMTHNSSWRVDHPESLQLVSWESWPEKNQSCQIVREAVDGCAQGRIPLYSAAVESTKQVQQAVSFAKHRNLRLVVRNTGHDMAGRSSAPGSLQILTSGLKGINYTENFVPFITQGSAEPMGPAVTIGAGILTGELYATGSEKGFVVLGGACSTVGIAGGFIQSGGMGILSPSKGLGSDHVLQVEIVTADGSHIIANQYQNEDLFWAVRGGGGGTFGVITSVTLRAFADLPATVTGIQINTPSADAIFWAGVKTVLSILPELTDAGNSARMIVLPASSTGGASASFEGYTFNKKGAVSLLALQRALDDFGIPFKLSHDFQGNLSRFLAAPKGVDLAGISVIPGSVFLSYDLVASKDGPAKVTSALSDLRLGPGSSFSVDAFGGGQVVNNKNRINSAVHPDWRSALLSLTVGRGVPPGYTLETLKSIESELENDQLPRLRSLEGGRKGAYLAVAYPNEVYFQDSFWGKNYDRLLKVKRAWDPEDLFITRVGVGSERWDDEGMCTRADSGLWHALARF.

Positions 1-18 (MKYTATFALLILAIGIQT) are cleaved as a signal peptide. N-linked (GlcNAc...) asparagine glycans are attached at residues asparagine 44, asparagine 80, asparagine 103, asparagine 178, and asparagine 396. Residues 117–303 (AQGRIPLYSA…TSVTLRAFAD (187 aa)) enclose the FAD-binding PCMH-type domain.

It belongs to the oxygen-dependent FAD-linked oxidoreductase family. It depends on FAD as a cofactor.

In terms of biological role, FAD-linked oxidoreductase; part of the gene cluster that mediates the biosynthesis of malbrancheamide, a dichlorinated fungal indole alkaloid that belongs to a family of natural products containing a characteristic bicyclo[2.2.2]diazaoctane core. The first step of malbrancheamide biosynthesis involves coupling of L-proline and L-tryptophan by malG, a bimodular NRPS, to produce L-Pro-L-Trp aldehyde through reductive offloading. This compound undergoes spontaneous cyclization and dehydration to give a dienamine which is reverse prenylated at C-2 by malE. The other prenyltransferase present in the cluster, malB, displays modest activity, suggesting that may be a redundant gene in the pathway. Subsequently, a [4+2] Diels-Alder cyclo-addition catalyzed by the bifunctional enzyme malC forms the characteristic bicyclo[2.2.2]diazaoctane ring of premalbrancheamid. Finally, the flavin-dependent halogenase malA catalyzes the iterative dichlorination of the indole ring of premalbrancheamide to yield C-9 monochlorinated malbrancheamide B, C-8 monochlorinated isomalbrancheamide B, and dichlorinated malbrancheamide. MalA is also able to brominate premalbrancheamide at C-9 to yield malbrancheamide C, and, to a lesser extend, at C-8 to yield isomalbrancheamide C. Finally, malA can brominate C-9 monochlorinated malbrancheamide B at C-8 to yield malbrancheamide D, or C-8 monochlorinated isomalbrancheamide B at C-9 to produce isomalbrancheamide D. This is FAD-linked oxidoreductase malF from Malbranchea aurantiaca.